The chain runs to 144 residues: MKFNKMVSSDRGKNRKRHFNAPSHMRRKIMSSPMSKELRQKYNCRSMPIRKDDEVQVVRGHFKGQQVGKVVQVYRKKFVVHIERIQREKANGATVYVGIHPSKVLIVKLKMDKDRKRILDNKAKSRAKALAEKGKYTEETMETS.

Residues 1 to 22 (MKFNKMVSSDRGKNRKRHFNAP) are disordered. Residues 13–22 (KNRKRHFNAP) are compositionally biased toward basic residues.

The protein belongs to the universal ribosomal protein uL24 family.

This Littorina littorea (Common periwinkle) protein is Large ribosomal subunit protein uL24 (RPL26).